The primary structure comprises 488 residues: Catalase (488 aa).

The tract at residues 1–24 (MTDRRNLTTNQGVPIGDNQNSMTA) is disordered. Residues 7-23 (LTTNQGVPIGDNQNSMT) are compositionally biased toward polar residues. Active-site residues include H55 and N128. Residue Y338 coordinates heme.

The protein belongs to the catalase family. Heme serves as cofactor.

The protein localises to the cytoplasm. The catalysed reaction is 2 H2O2 = O2 + 2 H2O. Functionally, decomposes hydrogen peroxide into water and oxygen; serves to protect cells from the toxic effects of hydrogen peroxide. The sequence is that of Catalase (kat) from Listeria seeligeri.